The primary structure comprises 133 residues: Interleukin-4 (133 aa).

The signal sequence occupies residues 1-24 (MGLTSQLIPTLVCLLVCTSNFAHG). 3 cysteine pairs are disulfide-bonded: C27/C133, C48/C85, and C70/C105. N62, N96, N102, and N108 each carry an N-linked (GlcNAc...) asparagine glycan.

It belongs to the IL-4/IL-13 family.

Its subcellular location is the secreted. Its function is as follows. Participates in at least several B-cell activation processes as well as of other cell types. It is a costimulator of DNA-synthesis. It induces the expression of class II MHC molecules on resting B-cells. It enhances both secretion and cell surface expression of IgE and IgG1. It also regulates the expression of the low affinity Fc receptor for IgE (CD23) on both lymphocytes and monocytes. Positively regulates IL31RA expression in macrophages. Stimulates autophagy in dendritic cells by interfering with mTORC1 signaling and through the induction of RUFY4. This is Interleukin-4 (IL4) from Lama glama (Llama).